Reading from the N-terminus, the 1170-residue chain is Thrombospondin-1 (1170 aa).

The N-terminal stretch at 1-18 (MGLAWGLGVLFLMHVCGT) is a signal peptide. The tract at residues 47–95 (RLVKGPDPSSPAFRIEDANLIPPVPDDKFQDLVDAVRAEKGFLLLASLR) is heparin-binding. Positions 65-270 (NLIPPVPDDK…HKTKDLQAIC (206 aa)) constitute a Laminin G-like domain. Cysteines 171 and 232 form a disulfide. 2 N-linked (GlcNAc...) asparagine glycosylation sites follow: asparagine 248 and asparagine 360. The VWFC domain occupies 316 to 373 (PLCYHNGVQYRNNEEWTVDSCTECHCQNSVTICKKVSCPIMPCSNATVPDGECCPRCW). TSP type-1 domains are found at residues 379 to 429 (DDGW…QECD), 435 to 490 (DGGW…DACP), and 492 to 547 (NGGW…QDCP). The C-linked (Man) tryptophan glycan is linked to tryptophan 385. Cystine bridges form between cysteine 391–cysteine 423, cysteine 395–cysteine 428, and cysteine 406–cysteine 413. O-linked (Fuc...) serine glycosylation is present at serine 394. 2 C-linked (Man) tryptophan glycosylation sites follow: tryptophan 438 and tryptophan 441. 3 cysteine pairs are disulfide-bonded: cysteine 447-cysteine 484, cysteine 451-cysteine 489, and cysteine 462-cysteine 474. An O-linked (Fuc...) threonine glycan is attached at threonine 450. Tryptophan 498 carries a C-linked (Man) tryptophan glycan. 21 cysteine pairs are disulfide-bonded: cysteine 504/cysteine 541, cysteine 508/cysteine 546, cysteine 519/cysteine 531, cysteine 551/cysteine 562, cysteine 556/cysteine 572, cysteine 575/cysteine 586, cysteine 592/cysteine 608, cysteine 599/cysteine 617, cysteine 620/cysteine 644, cysteine 650/cysteine 663, cysteine 657/cysteine 676, cysteine 678/cysteine 689, cysteine 705/cysteine 713, cysteine 718/cysteine 738, cysteine 754/cysteine 774, cysteine 777/cysteine 797, cysteine 813/cysteine 833, cysteine 836/cysteine 856, cysteine 874/cysteine 894, cysteine 910/cysteine 930, and cysteine 946/cysteine 1167. Residue threonine 507 is glycosylated (O-linked (Fuc...) threonine). Positions 531 to 1152 (CVGDVTENQI…YAGGRLGLFV (622 aa)) are involved in retention in extracellular matrix (ECM); involved in trimer formation. An EGF-like 1 domain is found at 547-587 (PIDGCLSNPCFAGVKCTSYPDGSWKCGACPPGYSGNGIQCT). O-linked (Xyl) serine glycosylation occurs at serine 553. The EGF-like 2 domain maps to 646–690 (PRNPCTDGTHDCNKNAKCNYLGHYSDPMYRCECKPGYAGNGIICG). TSP type-3 repeat units lie at residues 691 to 726 (EDTD…NSGQ), 727 to 762 (EDYD…NPAQ), 763 to 785 (YDYD…NPDQ), 786 to 821 (ADTD…NVDQ), 822 to 844 (RDTD…NPDQ), 845 to 882 (LDSD…NANQ), 883 to 918 (ADHD…NPDQ), and 919 to 954 (KDSD…DISE). The N-linked (GlcNAc...) asparagine glycan is linked to asparagine 708. Residues 839-934 (EHNPDQLDSD…GRGDACKDDF (96 aa)) are disordered. 3 stretches are compositionally biased toward basic and acidic residues: residues 840–854 (HNPD…RIGD), 883–894 (ADHDKDGKGDAC), and 917–934 (DQKD…KDDF). Positions 926–928 (RGD) match the Cell attachment site motif. Residues 958–1170 (RRFQMIPLDP…SDLKYECRDP (213 aa)) enclose the TSP C-terminal domain. Residue asparagine 1067 is glycosylated (N-linked (GlcNAc...) asparagine).

It belongs to the thrombospondin family. In terms of assembly, homotrimer; disulfide-linked. Can bind to fibrinogen, fibronectin, laminin, type V collagen and integrins alpha-V/beta-1, alpha-V/beta-3 and alpha-IIb/beta-3. Binds heparin. Interacts (via the C-terminal domain) with CD47. Interacts (via the TSP type I repeats) with CD36; the interaction conveys an antiangiogenic effect. Interacts (via the TSP type I repeats) with HRG; the interaction blocks the antiangiogenic effect of THBS1 with CD36. Interacts with ATF6 (via lumenal domain). Interacts with FN1; this interaction is enhanced by TNFAIP6, which may act as a bridging molecule between FN1 and THBS1. Interacts with SIRPA; the interaction stimulates phosphorylation of SIRPA. In terms of tissue distribution, expressed by platelets (at protein level). Expressed by monocyte-derived immature and mature dendritic cells (at protein level).

It is found in the secreted. The protein localises to the cell surface. It localises to the extracellular space. The protein resides in the extracellular matrix. Its subcellular location is the endoplasmic reticulum. It is found in the sarcoplasmic reticulum. Adhesive glycoprotein that mediates cell-to-cell and cell-to-matrix interactions. Multifunctional, involved in inflammation, angiogenesis, wound healing, reactive oxygen species (ROS) signaling, nitrous oxide (NO) signaling, apoptosis, senescence, aging, cellular self-renewal, stemness, and cardiovascular and metabolic homeostasis. Negatively modulates dendritic cell activation and cytokine release, as part of an autocrine feedback loop, contributing to the resolution of inflammation and immune homeostasis. Ligand for receptor CD47. Modulates nitrous oxide (NO) signaling via CD47, hence playing a role as a pressor agent, supporting blood pressure. Plays a role in endothelial cell senescence, acting via CD47, by increasing the abundance and activation of NADPH oxidase NOX1, and so generating excess ROS. Inhibits stem cell self-renewal, acting via CD47 signaling, probably by regulation of the stem cell transcription factors POU5F1/OCT4, SOX2, MYC/c-Myc and KLF4. Negatively modulates wound healing, acting via CD47. Ligand for receptor CD36. Involved in inducing apoptosis in podocytes in response to elevated free fatty acids, acting via CD36. Plays a role in suppressing angiogenesis, acting, depending on context, via CD36 or CD47. Promotes cellular senescence in a TP53-CDKN1A-RB1 signaling-dependent manner. Ligand for immunoglobulin-like cell surface receptor SIRPA. Involved in ROS signaling in non-phagocytic cells, stimulating NADPH oxidase-derived ROS production, acting via interaction with SIRPA. Plays a role in metabolic dysfunction in diet-induced obesity, perhaps acting by exacerbating adipose inflammatory activity; its effects may be mediated, at least in part, through enhanced adipocyte proliferation. Plays a role in ER stress response, via its interaction with the activating transcription factor 6 alpha (ATF6) which produces adaptive ER stress response factors. May be involved in age-related conditions, including metabolic dysregulation, during normal aging. This is Thrombospondin-1 from Homo sapiens (Human).